Reading from the N-terminus, the 458-residue chain is Acetyl-CoA decarbonylase/synthase complex subunit gamma (458 aa).

Residues 1–59 enclose the 4Fe-4S domain; that stretch reads MQVTAMDVYRLLPKTNCGKCNEASCMAFATKLIEKEVTLDDCPQLSGDERQKLENLLAP. Residues Cys-17, Cys-20, Cys-25, and Cys-42 each coordinate [4Fe-4S] cluster.

As to quaternary structure, heterodimer of delta and gamma chains. The ACDS complex is made up of alpha, epsilon, beta, gamma and delta chains with a probable stoichiometry of (alpha(2)epsilon(2))(4)-beta(8)-(gamma(1)delta(1))(8). The cofactor is corrinoid. It depends on [4Fe-4S] cluster as a cofactor.

It carries out the reaction 5,6,7,8-tetrahydrosarcinapterin + methyl-Co(III)-[corrinoid Fe-S protein] = 5-methyltetrahydrosarcinapterin + Co(I)-[corrinoid Fe-S protein] + H(+). Functionally, part of a complex that catalyzes the reversible cleavage of acetyl-CoA, allowing autotrophic growth from CO(2). The chain is Acetyl-CoA decarbonylase/synthase complex subunit gamma from Methanothermobacter thermautotrophicus (strain ATCC 29096 / DSM 1053 / JCM 10044 / NBRC 100330 / Delta H) (Methanobacterium thermoautotrophicum).